Consider the following 171-residue polypeptide: RNA silencing suppressor p19 (171 aa).

A compositionally biased stretch (basic and acidic residues) spans 1 to 15; it reads MERAIPGNDTREPAY. The tract at residues 1 to 32 is disordered; it reads MERAIPGNDTREPAYGERWNGGPGGSTSPFQL.

The protein belongs to the tombusvirus protein p19 family. In terms of assembly, homodimer.

Viral suppressor of RNA silencing which binds specifically to silencing RNAs (siRNAs). Acts as a molecular caliper to specifically select siRNAs based on the length of the duplex region of the RNA. This is RNA silencing suppressor p19 from Capsicum annuum (Capsicum pepper).